The primary structure comprises 381 residues: (S)-scoulerine 9-O-methyltransferase (381 aa).

S-adenosyl-L-methionine contacts are provided by Gly223, Glu246, Asp266, Met267, and Lys280. The active-site Proton acceptor is the His284.

This sequence belongs to the class I-like SAM-binding methyltransferase superfamily. Cation-independent O-methyltransferase family. COMT subfamily.

The catalysed reaction is (S)-scoulerine + S-adenosyl-L-methionine = (S)-tetrahydrocolumbamine + S-adenosyl-L-homocysteine + H(+). Its function is as follows. Produces a precursor of protoberberine alkaloids. This is (S)-scoulerine 9-O-methyltransferase (SMT) from Coptis japonica (Japanese goldthread).